Reading from the N-terminus, the 314-residue chain is Probable carboxylesterase 2 (314 aa).

Residues 79–81 (HGG) carry the Involved in the stabilization of the negatively charged intermediate by the formation of the oxyanion hole motif. Active-site residues include Ser-158, Asp-254, and His-286.

This sequence belongs to the 'GDXG' lipolytic enzyme family. Expressed in roots and flowers.

The catalysed reaction is a carboxylic ester + H2O = an alcohol + a carboxylate + H(+). Its function is as follows. Carboxylesterase acting on esters with varying acyl chain length. This Arabidopsis thaliana (Mouse-ear cress) protein is Probable carboxylesterase 2 (CXE2).